The following is a 431-amino-acid chain: MTPPHFFLSLIKKRCICWICLEESTYDSTWLQHTCGCNLQIHKRCYIRWLYQMHVELFLPNTVDLPKDADLPIITCLKCLVDGHHDFMTTFSLTEIWETRPIWGQKSVPFQNDYVFNLMSLYTKRDNHPPYVLVKFGECPQCKKTNFIKRPTVTIQSSVLSLFYQWQKITRYVIPLGITSLFLLNPEKTSFDIGLWQLRCLFPENVLRNMLNISTTKALDVYAQTERGLLSIPLTSSIIIYGFIHYLSNISNVSANAILFKWVYLSIVKTAGNKYYKGIGLPKIILYSNLATFCYNFTFKRLVDLIYRRLINKGGKYLYHGNFENSSNSVPAEEFFIRRNWYAILAEKILWPFVGKCTGGLLLNAFLWIQRKFKIEWTPNCSPSEFRMIFNIIGCGTAAIGWSSLKLYASYKRCQELEKINEFIEQSCKGE.

4 helical membrane-spanning segments follow: residues 228 to 248 (GLLS…HYLS), 279 to 299 (IGLP…NFTF), 349 to 369 (ILWP…FLWI), and 388 to 408 (MIFN…LKLY).

Its subcellular location is the membrane. This is an uncharacterized protein from Saccharomyces cerevisiae (strain ATCC 204508 / S288c) (Baker's yeast).